Consider the following 294-residue polypeptide: NADH-cytochrome b5 reductase 1 (294 aa).

Residues 13–33 (PHASFLGGLVVAAILGLFIFF) traverse the membrane as a helical segment. The region spanning 44-147 (VEWRSFKLVD…KGPKGKFVYT (104 aa)) is the FAD-binding FR-type domain. FAD-binding positions include 127–142 (SLLT…GPKG) and 153–185 (HLVM…RLSL).

The protein belongs to the flavoprotein pyridine nucleotide cytochrome reductase family. Monomer. Component of the 2-(3-amino-3-carboxypropyl)histidine synthase complex composed of DPH1, DPH2, DPH3 and a NADH-dependent reductase, predominantly CBR1. It depends on FAD as a cofactor.

It localises to the mitochondrion outer membrane. It carries out the reaction 2 Fe(III)-[cytochrome b5] + NADH = 2 Fe(II)-[cytochrome b5] + NAD(+) + H(+). It catalyses the reaction 2 Fe(3+)-[Dph3] + NADH = 2 Fe(2+)-[Dph3] + NAD(+) + H(+). The protein operates within protein modification; peptidyl-diphthamide biosynthesis. NADH-dependent reductase for DPH3 and cytochrome b5. Required for the first step of diphthamide biosynthesis, a post-translational modification of histidine which occurs in elongation factor 2. DPH1 and DPH2 transfer a 3-amino-3-carboxypropyl (ACP) group from S-adenosyl-L-methionine (SAM) to a histidine residue, the reaction is assisted by a reduction system comprising DPH3 and a NADH-dependent reductase, predominantly CBR1. By reducing DPH3, also involved in the formation of the tRNA wobble base modification mcm5s 2U (5-methoxycarbonylmethyl-2-thiouridine), mediated by the elongator complex. The cytochrome b5/NADH cytochrome b5 reductase electron transfer system supports the catalytic activity of several sterol biosynthetic enzymes. The sequence is that of NADH-cytochrome b5 reductase 1 (CBR1) from Cryptococcus neoformans var. neoformans serotype D (strain B-3501A) (Filobasidiella neoformans).